We begin with the raw amino-acid sequence, 45 residues long: Large ribosomal subunit protein bL34 (45 aa).

The protein belongs to the bacterial ribosomal protein bL34 family.

This is Large ribosomal subunit protein bL34 from Streptomyces avermitilis (strain ATCC 31267 / DSM 46492 / JCM 5070 / NBRC 14893 / NCIMB 12804 / NRRL 8165 / MA-4680).